A 387-amino-acid polypeptide reads, in one-letter code: Succinate--CoA ligase [ADP-forming] subunit beta (387 aa).

Residues 9-245 (KDLLESYGLK…KSQENAKELK (237 aa)) form the ATP-grasp domain. ATP contacts are provided by residues K46, 53 to 55 (GRG), E100, Y103, and E108. Positions 200 and 214 each coordinate Mg(2+). Residues N265 and 322–324 (GIV) contribute to the substrate site.

This sequence belongs to the succinate/malate CoA ligase beta subunit family. Heterotetramer of two alpha and two beta subunits. It depends on Mg(2+) as a cofactor.

It catalyses the reaction succinate + ATP + CoA = succinyl-CoA + ADP + phosphate. The enzyme catalyses GTP + succinate + CoA = succinyl-CoA + GDP + phosphate. It participates in carbohydrate metabolism; tricarboxylic acid cycle; succinate from succinyl-CoA (ligase route): step 1/1. Its function is as follows. Succinyl-CoA synthetase functions in the citric acid cycle (TCA), coupling the hydrolysis of succinyl-CoA to the synthesis of either ATP or GTP and thus represents the only step of substrate-level phosphorylation in the TCA. The beta subunit provides nucleotide specificity of the enzyme and binds the substrate succinate, while the binding sites for coenzyme A and phosphate are found in the alpha subunit. This Francisella tularensis subsp. tularensis (strain WY96-3418) protein is Succinate--CoA ligase [ADP-forming] subunit beta.